We begin with the raw amino-acid sequence, 141 residues long: Hemoglobin subunit alpha-3 (141 aa).

A Globin domain is found at 1–141; sequence VLSPADKTNV…VSTVLTSKYR (141 aa). His-58 is an O2 binding site. Position 87 (His-87) interacts with heme b.

The protein belongs to the globin family. Heterotetramer of two alpha chains and two beta chains. As to expression, red blood cells.

Functionally, involved in oxygen transport from the lung to the various peripheral tissues. The chain is Hemoglobin subunit alpha-3 from Pan troglodytes (Chimpanzee).